The following is a 429-amino-acid chain: Z-DNA-binding protein 1 (429 aa).

Z-binding domains follow at residues 8-70 (PGRE…CLGG) and 103-166 (PQFS…TIYR). The disordered stretch occupies residues 68–107 (LGGTDPEGEGPAELALSSPAERPQQHAATIPETPGPQFSQ). 2 consecutive short sequence motifs (RIP homotypic interaction motif (RHIM)) follow at residues 195 to 219 (NSWI…RQTV) and 253 to 277 (DIHM…LHGV). 2 disordered regions span residues 277–299 (VPSE…AAGP) and 339–429 (KMSI…GGGI). The segment covering 347–358 (AGPGGVAGSGEG) has biased composition (gly residues). The segment covering 407–420 (KAAEGSHYVDEASH) has biased composition (basic and acidic residues).

As to quaternary structure, homodimer. Interacts (via RIP homotypic interaction motif) with RIPK3; leading to RIPK3 activation and necroptosis; interaction is enhanced by CASP6. Interacts (via RIP homotypic interaction motif) with RIPK1. Component of the AIM2 PANoptosome complex, a multiprotein complex that drives inflammatory cell death (PANoptosis). (Microbial infection) Interacts (via RIP homotypic interaction motif/RHIM) with herpes simplex virus 1/HHV-1 protein RIR1/ICP6 (via RHIM); this interaction may induce heteromeric amyloid assemblies and prevent necroptosis activation. Interacts with human herpes simplex virus 1/HHV-1 protein ICP0. In terms of processing, phosphorylated. In terms of tissue distribution, highly expressed in lymphatic tissues including lymph node, leukocytes, tonsil, bone marrow and spleen. Expressed to a lesser extent in thymus, lung and liver.

The protein localises to the cytoplasm. Its subcellular location is the nucleus. With respect to regulation, ZBP1-dependent necroptosis is normally inhibited by RIPK1: RIPK1 inhibits the ZBP1-induced activation of RIPK3 via FADD-mediated recruitment of CASP8, which cleaves RIPK1 and limits TNF-induced necroptosis. Functionally, key innate sensor that recognizes and binds Z-RNA structures, which are produced by a number of viruses, such as herpesvirus, orthomyxovirus or flavivirus, and triggers different forms of cell death. ZBP1 acts as an essential mediator of pyroptosis, necroptosis and apoptosis (PANoptosis), an integral part of host defense against pathogens, by activating RIPK3, caspase-8 (CASP8), and the NLRP3 inflammasome. Key activator of necroptosis, a programmed cell death process in response to death-inducing TNF-alpha family members, via its ability to bind Z-RNA: once activated upon Z-RNA-binding, ZBP1 interacts and stimulates RIPK3 kinase, which phosphorylates and activates MLKL, triggering execution of programmed necrosis. In addition to TNF-induced necroptosis, necroptosis can also take place in the nucleus in response to orthomyxoviruses infection: ZBP1 recognizes and binds Z-RNA structures that are produced in infected nuclei by orthomyxoviruses, such as the influenza A virus (IAV), leading to ZBP1 activation, RIPK3 stimulation and subsequent MLKL phosphorylation, triggering disruption of the nuclear envelope and leakage of cellular DNA into the cytosol. ZBP1-dependent cell death in response to IAV infection promotes interleukin-1 alpha (IL1A) induction in an NLRP3-inflammasome-independent manner: IL1A expression is required for the optimal interleukin-1 beta (IL1B) production, and together, these cytokines promote infiltration of inflammatory neutrophils to the lung, leading to the formation of neutrophil extracellular traps. In addition to its direct role in driving necroptosis via its ability to sense Z-RNAs, also involved in PANoptosis triggered in response to bacterial infection: component of the AIM2 PANoptosome complex, a multiprotein complex that triggers PANoptosis. Also acts as the apical sensor of fungal infection responsible for activating PANoptosis. Involved in CASP8-mediated cell death via its interaction with RIPK1 but independently of its ability to sense Z-RNAs. In some cell types, also able to restrict viral replication by promoting cell death-independent responses. In response to Zika virus infection in neurons, promotes a cell death-independent pathway that restricts viral replication: together with RIPK3, promotes a death-independent transcriptional program that modifies the cellular metabolism via up-regulation expression of the enzyme ACOD1/IRG1 and production of the metabolite itaconate. Itaconate inhibits the activity of succinate dehydrogenase, generating a metabolic state in neurons that suppresses replication of viral genomes. In terms of biological role, (Microbial infection) In case of herpes simplex virus 1/HHV-1 infection, forms hetero-amyloid structures with HHV-1 protein RIR1/ICP6 which may inhibit ZBP1-mediated necroptosis, thereby preventing host cell death pathway and allowing viral evasion. The chain is Z-DNA-binding protein 1 from Homo sapiens (Human).